A 458-amino-acid chain; its full sequence is MNQYLFLLPEITLFILSCLLLFLKSRNEFGLIAVLITLAATFFSQTCTSVEILNGMLLISPFTQNVKLVILAFTCVFFIQAIAVKQSYSKNFSVLVLLSLLGMLLSVSSSTLASLYLAVELHSIGQYILACIKHKSIKSAEAGVKYTLLGTFMSAVMIYGISLIFVVSGDLSLKSLFIANSKIHSIGILLFISGLMFKVAAAPFHAWIGDIYEGAPTVSTTFFAVLPKLSLIVVLVSLISNLEPIAYTGSTYSTELMENSQYLRNILFTSGILSIAFGTFSAFGQKNIKRFIGFASIAHVGYMLLGVSNSASLSFGNPGIAYALVYSFTNLGILSVVLMLKDKHITSLKKLRCSNNLVALAFVLLLFSSAGVPPFIGFWSKAYVVKTLVETNHIPTAIFSMLAGVISAFYYARIAKETYFTNMAEENIEASLRHNTLLTSIVVLCALFSTFGFVLLIY.

A run of 13 helical transmembrane segments spans residues 3 to 23 (QYLFLLPEITLFILSCLLLFL), 29 to 49 (FGLIAVLITLAATFFSQTCTS), 64 to 84 (QNVKLVILAFTCVFFIQAIAV), 92 to 112 (FSVLVLLSLLGMLLSVSSSTL), 147 to 167 (TLLGTFMSAVMIYGISLIFVV), 188 to 208 (ILLFISGLMFKVAAAPFHAWI), 222 to 242 (FFAVLPKLSLIVVLVSLISNL), 265 to 285 (NILFTSGILSIAFGTFSAFGQ), 291 to 311 (FIGFASIAHVGYMLLGVSNSA), 320 to 340 (IAYALVYSFTNLGILSVVLML), 358 to 378 (VALAFVLLLFSSAGVPPFIGF), 394 to 414 (IPTAIFSMLAGVISAFYYARI), and 437 to 457 (LLTSIVVLCALFSTFGFVLLI).

Belongs to the complex I subunit 2 family. As to quaternary structure, NDH-1 is composed of 14 different subunits. Subunits NuoA, H, J, K, L, M, N constitute the membrane sector of the complex.

It localises to the cell inner membrane. It catalyses the reaction a quinone + NADH + 5 H(+)(in) = a quinol + NAD(+) + 4 H(+)(out). Functionally, NDH-1 shuttles electrons from NADH, via FMN and iron-sulfur (Fe-S) centers, to quinones in the respiratory chain. The immediate electron acceptor for the enzyme in this species is believed to be ubiquinone. Couples the redox reaction to proton translocation (for every two electrons transferred, four hydrogen ions are translocated across the cytoplasmic membrane), and thus conserves the redox energy in a proton gradient. In Neorickettsia risticii (strain Illinois), this protein is NADH-quinone oxidoreductase subunit N.